Consider the following 411-residue polypeptide: Acetylornithine aminotransferase (411 aa).

Pyridoxal 5'-phosphate contacts are provided by residues glycine 107 to threonine 108 and phenylalanine 141. Arginine 144 contacts N(2)-acetyl-L-ornithine. Aspartate 227–glutamine 230 serves as a coordination point for pyridoxal 5'-phosphate. At lysine 256 the chain carries N6-(pyridoxal phosphate)lysine. Residue threonine 284 participates in N(2)-acetyl-L-ornithine binding. Threonine 285 contributes to the pyridoxal 5'-phosphate binding site.

It belongs to the class-III pyridoxal-phosphate-dependent aminotransferase family. ArgD subfamily. In terms of assembly, homodimer. It depends on pyridoxal 5'-phosphate as a cofactor.

It localises to the cytoplasm. The catalysed reaction is N(2)-acetyl-L-ornithine + 2-oxoglutarate = N-acetyl-L-glutamate 5-semialdehyde + L-glutamate. The protein operates within amino-acid biosynthesis; L-arginine biosynthesis; N(2)-acetyl-L-ornithine from L-glutamate: step 4/4. The protein is Acetylornithine aminotransferase of Xylella fastidiosa (strain 9a5c).